The primary structure comprises 594 residues: Aspartate--tRNA(Asp/Asn) ligase (594 aa).

E175 is an L-aspartate binding site. An aspartate region spans residues 199–202 (QQFK). 2 residues coordinate L-aspartate: R221 and H455. Residue 221–223 (RDE) participates in ATP binding. E488 contributes to the ATP binding site. R495 lines the L-aspartate pocket. 540 to 543 (GIDR) contacts ATP.

Belongs to the class-II aminoacyl-tRNA synthetase family. Type 1 subfamily. In terms of assembly, homodimer.

It is found in the cytoplasm. It catalyses the reaction tRNA(Asx) + L-aspartate + ATP = L-aspartyl-tRNA(Asx) + AMP + diphosphate. Functionally, aspartyl-tRNA synthetase with relaxed tRNA specificity since it is able to aspartylate not only its cognate tRNA(Asp) but also tRNA(Asn). Reaction proceeds in two steps: L-aspartate is first activated by ATP to form Asp-AMP and then transferred to the acceptor end of tRNA(Asp/Asn). This chain is Aspartate--tRNA(Asp/Asn) ligase, found in Ruegeria sp. (strain TM1040) (Silicibacter sp.).